The following is a 373-amino-acid chain: 3 beta-hydroxysteroid dehydrogenase/Delta 5--&gt;4-isomerase type 1 (373 aa).

NADP(+) is bound by residues 10–15 (GAGGFL), Tyr155, and Lys159. Lys159 serves as the catalytic Proton donor. The chain crosses the membrane as a helical span at residues 288–308 (LSLMYWIGFLLEIVSFLLRPI).

Belongs to the 3-beta-HSD family. In terms of tissue distribution, placenta and skin. Predominantly expressed in mammary gland tissue.

The protein resides in the endoplasmic reticulum membrane. It localises to the mitochondrion membrane. It catalyses the reaction a 3beta-hydroxy-Delta(5)-steroid + NAD(+) = a 3-oxo-Delta(5)-steroid + NADH + H(+). It carries out the reaction pregnenolone + NAD(+) = pregn-5-ene-3,20-dione + NADH + H(+). The enzyme catalyses 3beta-hydroxyandrost-5-en-17-one + NAD(+) = androst-5-ene-3,17-dione + NADH + H(+). The catalysed reaction is androst-5-en-3beta,17beta-diol + NAD(+) = 17beta-hydroxy-androst-5-en-3-one + NADH + H(+). It catalyses the reaction a 3beta-hydroxysteroid + NADP(+) = a 3-oxosteroid + NADPH + H(+). It carries out the reaction 5alpha-androstane-3beta,17beta-diol + NADP(+) = 17beta-hydroxy-5alpha-androstan-3-one + NADPH + H(+). The enzyme catalyses 3beta-hydroxy-5alpha-androstan-17-one + NADP(+) = 5alpha-androstan-3,17-dione + NADPH + H(+). The catalysed reaction is a 3-oxo-Delta(5)-steroid = a 3-oxo-Delta(4)-steroid. It catalyses the reaction pregn-5-ene-3,20-dione = progesterone. It carries out the reaction androst-5-ene-3,17-dione = androst-4-ene-3,17-dione. The enzyme catalyses 17beta-hydroxy-androst-5-en-3-one = testosterone. The catalysed reaction is 5alpha-androstane-3beta,17beta-diol + NAD(+) = 17beta-hydroxy-5alpha-androstan-3-one + NADH + H(+). It participates in steroid hormone biosynthesis. The protein operates within steroid metabolism. Its function is as follows. A bifunctional enzyme responsible for the oxidation and isomerization of 3beta-hydroxy-Delta(5)-steroid precursors to 3-oxo-Delta(4)-steroids, an essential step in steroid hormone biosynthesis. Specifically catalyzes the conversion of pregnenolone to progesterone, 17alpha-hydroxypregnenolone to 17alpha-hydroxyprogesterone, dehydroepiandrosterone (DHEA) to 4-androstenedione, and androstenediol to testosterone. Additionally, catalyzes the interconversion between 3beta-hydroxy and 3-oxo-5alpha-androstane steroids controlling the bioavalability of the active forms. Specifically converts dihydrotestosterone to its inactive form 5alpha-androstanediol, that does not bind androgen receptor/AR. Also converts androstanedione, a precursor of testosterone and estrone, to epiandrosterone. Expected to use NAD(+) as preferred electron donor for the 3beta-hydroxy-steroid dehydrogenase activity and NADPH for the 3-ketosteroid reductase activity. The sequence is that of 3 beta-hydroxysteroid dehydrogenase/Delta 5--&gt;4-isomerase type 1 from Homo sapiens (Human).